A 470-amino-acid polypeptide reads, in one-letter code: Cysteine--tRNA ligase (470 aa).

Residue Cys-28 participates in Zn(2+) binding. A 'HIGH' region motif is present at residues 30–40 (PTVYNYIHIGN). Positions 212, 237, and 241 each coordinate Zn(2+). Positions 271–275 (KMSKS) match the 'KMSKS' region motif. Lys-274 provides a ligand contact to ATP.

Belongs to the class-I aminoacyl-tRNA synthetase family. As to quaternary structure, monomer. Requires Zn(2+) as cofactor.

It localises to the cytoplasm. It carries out the reaction tRNA(Cys) + L-cysteine + ATP = L-cysteinyl-tRNA(Cys) + AMP + diphosphate. The polypeptide is Cysteine--tRNA ligase (Ligilactobacillus salivarius (strain UCC118) (Lactobacillus salivarius)).